Here is a 373-residue protein sequence, read N- to C-terminus: uncharacterized protein (373 aa).

The protein belongs to the glycosyltransferase 28 family.

This is an uncharacterized protein from Bacillus subtilis (strain 168).